We begin with the raw amino-acid sequence, 1265 residues long: Dynactin subunit 1 (1265 aa).

One can recognise a CAP-Gly domain in the interval 27-69 (GMTSFAVGKWVGVVLDEPKGKNSGSIKGQQYFQCDENCGMFVR). Positions 81-179 (GSRRSIEDVS…GNGAASHASS (99 aa)) are disordered. Phosphoserine is present on residues serine 85, serine 110, serine 114, serine 117, and serine 121. 2 stretches are compositionally biased toward low complexity: residues 103–138 (RLSS…SSSS) and 161–177 (AEGA…ASHA). At serine 183 the chain carries Phosphoserine. Coiled coils occupy residues 213 to 570 (NSGA…ESLQ), 812 to 836 (LIQF…RLPS), and 967 to 1084 (QRAQ…NSTT). The interval 1082 to 1106 (STTGKVQPGSESHSPHNISLSGNTS) is disordered. At serine 1117 the chain carries Phosphoserine. A coiled-coil region spans residues 1128–1160 (EEVELLKNAFNQERNQRLRLQAQDMRAKLSQFE).

This sequence belongs to the dynactin 150 kDa subunit family. In terms of assembly, monomer and homodimer. Subunit of dynactin, a multiprotein complex part of a tripartite complex with dynein and a adapter, such as BICDL1, BICD2 or HOOK3. The dynactin complex is built around ACTR1A/ACTB filament and consists of an actin-related filament composed of a shoulder domain, a pointed end and a barbed end. Its length is defined by its flexible shoulder domain. The soulder is composed of 2 DCTN1 subunits, 4 DCTN2 and 2 DCTN3. DCTN1/p150(glued) binds directly to microtubules and to cytoplasmic dynein.

It localises to the cytoplasm. It is found in the cytoskeleton. Part of the dynactin complex that activates the molecular motor dynein for ultra-processive transport along microtubules. Plays a key role in dynein-mediated retrograde transport of vesicles and organelles along microtubules by recruiting and tethering dynein to microtubules. Binds to both dynein and microtubules providing a link between specific cargos, microtubules and dynein. Essential for targeting dynein to microtubule plus ends, recruiting dynein to membranous cargos and enhancing dynein processivity (the ability to move along a microtubule for a long distance without falling off the track). Can also act as a brake to slow the dynein motor during motility along the microtubule. Can regulate microtubule stability by promoting microtubule formation, nucleation and polymerization and by inhibiting microtubule catastrophe in neurons. Inhibits microtubule catastrophe by binding both to microtubules and to tubulin, leading to enhanced microtubule stability along the axon. Plays a role in metaphase spindle orientation. Plays a role in centriole cohesion and subdistal appendage organization and function. Its recruitment to the centriole in a KIF3A-dependent manner is essential for the maintenance of centriole cohesion and the formation of subdistal appendage. Also required for microtubule anchoring at the mother centriole. Plays a role in primary cilia formation. The sequence is that of Dynactin subunit 1 from Drosophila melanogaster (Fruit fly).